Consider the following 185-residue polypeptide: Endoribonuclease YbeY (185 aa).

The Zn(2+) site is built by His142, His146, and His152.

Belongs to the endoribonuclease YbeY family. Zn(2+) serves as cofactor.

The protein localises to the cytoplasm. Its function is as follows. Single strand-specific metallo-endoribonuclease involved in late-stage 70S ribosome quality control and in maturation of the 3' terminus of the 16S rRNA. This chain is Endoribonuclease YbeY, found in Parvibaculum lavamentivorans (strain DS-1 / DSM 13023 / NCIMB 13966).